A 485-amino-acid polypeptide reads, in one-letter code: MAANTGIIKGNTHEWEMVIGLEVHAQVISNSKLFSGASTGFCSEPNTQVALFDVAMPGTLPVLNARCVEQAVRTSLALSCEVHKYSVFDRKNYFYPDLASGYQITQFYFPIATDGHITLDECCSKDVRISRIHLEQDAGKSMHVGDKTYLDFNRAGVALMEIVSAPDFRSPEEAAEYIKKLRIILRAIGTCDGDMENGSLRCDANVSVRKVGDSNLGARSEIKNLNSIKHLAQAIRHEACRQVEVLESGGVVSQSTMLFDVDTCTTRSMREKEDACDYRYFPDPDLLPLELTTAFIDNIRASLPELPSEKKRRYMQDIGLSRYDADILSSDKDVSAYFESVVAKHAPDLAVPWITGELFGALNKRGSSIADSPVSAGRLVELLDLVADGTISGKMAKQVFALMFETEKSASDIVREQGLCQITSEETLAPIVDRIISESPDEVAEYRQGKTKLLGYFVGKVMKETNGQANPGLVNTLIKRRLAED.

It belongs to the GatB/GatE family. GatB subfamily. Heterotrimer of A, B and C subunits.

It catalyses the reaction L-glutamyl-tRNA(Gln) + L-glutamine + ATP + H2O = L-glutaminyl-tRNA(Gln) + L-glutamate + ADP + phosphate + H(+). It carries out the reaction L-aspartyl-tRNA(Asn) + L-glutamine + ATP + H2O = L-asparaginyl-tRNA(Asn) + L-glutamate + ADP + phosphate + 2 H(+). In terms of biological role, allows the formation of correctly charged Asn-tRNA(Asn) or Gln-tRNA(Gln) through the transamidation of misacylated Asp-tRNA(Asn) or Glu-tRNA(Gln) in organisms which lack either or both of asparaginyl-tRNA or glutaminyl-tRNA synthetases. The reaction takes place in the presence of glutamine and ATP through an activated phospho-Asp-tRNA(Asn) or phospho-Glu-tRNA(Gln). This Anaplasma marginale (strain Florida) protein is Aspartyl/glutamyl-tRNA(Asn/Gln) amidotransferase subunit B.